The chain runs to 573 residues: Acyl-coenzyme A synthetase ACSM1, mitochondrial (573 aa).

The N-terminal 35 residues, Met-1–Arg-35, are a transit peptide targeting the mitochondrion. Lys-81 carries the post-translational modification N6-succinyllysine. Lys-142 is subject to N6-acetyllysine; alternate. Lys-142 is subject to N6-succinyllysine; alternate. Position 179 is an N6-succinyllysine (Lys-179). The residue at position 200 (Lys-200) is an N6-acetyllysine; alternate. Lys-200 carries the N6-succinyllysine; alternate modification. The residue at position 210 (Lys-210) is an N6-acetyllysine. Thr-222 to Lys-230 is an ATP binding site. An N6-succinyllysine mark is found at Lys-233 and Lys-324. N6-acetyllysine; alternate occurs at positions 352 and 387. N6-succinyllysine; alternate occurs at positions 352 and 387. Residues Asp-448 and Arg-463 each contribute to the ATP site. Lys-501 is modified (N6-succinyllysine). Lys-527 bears the N6-acetyllysine mark. N6-acetyllysine; alternate is present on Lys-534. At Lys-534 the chain carries N6-succinyllysine; alternate. Lys-545 bears the N6-acetyllysine mark. Lys-559 is a binding site for ATP.

It belongs to the ATP-dependent AMP-binding enzyme family. Monomer. It depends on Mg(2+) as a cofactor. Mn(2+) is required as a cofactor. Highly expressed in liver and kidney.

The protein resides in the mitochondrion matrix. It is found in the mitochondrion. The catalysed reaction is a medium-chain fatty acid + ATP + CoA = a medium-chain fatty acyl-CoA + AMP + diphosphate. It carries out the reaction benzoate + ATP + CoA = benzoyl-CoA + AMP + diphosphate. The enzyme catalyses (R)-lipoate + GTP + H(+) = (R)-lipoyl-GMP + diphosphate. It catalyses the reaction octanoate + ATP + CoA = octanoyl-CoA + AMP + diphosphate. The catalysed reaction is decanoate + ATP + CoA = decanoyl-CoA + AMP + diphosphate. It carries out the reaction dodecanoate + ATP + CoA = dodecanoyl-CoA + AMP + diphosphate. The enzyme catalyses tetradecanoate + ATP + CoA = tetradecanoyl-CoA + AMP + diphosphate. It catalyses the reaction hexanoate + ATP + CoA = hexanoyl-CoA + AMP + diphosphate. The catalysed reaction is butanoate + ATP + CoA = butanoyl-CoA + AMP + diphosphate. It carries out the reaction hexadecanoate + ATP + CoA = hexadecanoyl-CoA + AMP + diphosphate. In terms of biological role, catalyzes the activation of fatty acids by CoA to produce an acyl-CoA, the first step in fatty acid metabolism. Capable of activating medium-chain fatty acids (e.g. butyric (C4) to decanoic (C10) acids), and certain carboxylate-containing xenobiotics, e.g. benzoate. Also catalyzes the activation of lipoate to lipoyl-nucleoside monophosphate. Activates lipoate with GTP at a 1000-fold higher rate than with ATP and activates both (R)- and (S)-lipoate to the respective lipoyl-GMP, with a preference for (R)-lipoate. The sequence is that of Acyl-coenzyme A synthetase ACSM1, mitochondrial (Acsm1) from Mus musculus (Mouse).